We begin with the raw amino-acid sequence, 216 residues long: Probable GTP-binding protein EngB (216 aa).

In terms of domain architecture, EngB-type G spans 27 to 201; that stretch reads EGIEVAFAGR…REKLDTWFSE (175 aa). Residues 35-42, 62-66, 80-83, 147-150, and 180-182 contribute to the GTP site; these read GRSNAGKS, GRTQL, DLPG, TKAD, and FSS. Serine 42 and threonine 64 together coordinate Mg(2+).

This sequence belongs to the TRAFAC class TrmE-Era-EngA-EngB-Septin-like GTPase superfamily. EngB GTPase family. Mg(2+) serves as cofactor.

Its function is as follows. Necessary for normal cell division and for the maintenance of normal septation. In Yersinia pseudotuberculosis serotype O:1b (strain IP 31758), this protein is Probable GTP-binding protein EngB.